A 502-amino-acid polypeptide reads, in one-letter code: Packaging protein 1 (502 aa).

The interval Glu-99–Ser-122 is disordered. Residue Gly-226–Ser-233 coordinates ATP. Residues Arg-495–Lys-502 are DNA-binding.

This sequence belongs to the adenoviridae packaging protein 1 family. Homodimer. Part of a genome packaging complex composed of packaging proteins 1, 2 and 3; this complex specifically binds to the packaging sequence on the left end of viral genomic DNA and performs packaging of the viral genome. Interacts with protein 33K.

Its subcellular location is the virion. It localises to the host nucleus. The protein resides in the host nucleoplasm. The protein localises to the host nucleolus. Component of the packaging machinery which encapsidates the viral DNA into preformed capsids and transcriptional activator of the viral major late promoter (MLP). Binds, along with packaging proteins 2 and 3, to the specific packaging sequence on the left end of viral genomic DNA and displays ATPase activity thereby providing the power stroke of the packaging machinery. The activity of packaging protein IVa2 is stimulated by protein 33K which acts as a terminase. May be the protein that pumps DNA into the capsid powered by ATP hydrolysis. Specifically binds to the 5'-CG-3' nucleotides of the repeats making up the packaging sequence. Component of the DEF-A and DEF-B transcription factors that bind downstream elements of the major late promoter (MLP), and stimulate transcription from the MLP after initiation of viral DNA replication. DEF-A is a heterodimer packaging proteins 1 and 2 and DEF-B is a homodimer of packaging protein 1. This is Packaging protein 1 from Canis lupus familiaris (Dog).